The chain runs to 395 residues: Ribosomal RNA large subunit methyltransferase G (395 aa).

It belongs to the methyltransferase superfamily. RlmG family.

Its subcellular location is the cytoplasm. The catalysed reaction is guanosine(1835) in 23S rRNA + S-adenosyl-L-methionine = N(2)-methylguanosine(1835) in 23S rRNA + S-adenosyl-L-homocysteine + H(+). Specifically methylates the guanine in position 1835 (m2G1835) of 23S rRNA. The chain is Ribosomal RNA large subunit methyltransferase G from Yersinia pseudotuberculosis serotype O:1b (strain IP 31758).